The following is a 389-amino-acid chain: G2/M cell-cycle inhibitor DR6 (389 aa).

Belongs to the Roseolovirus DR6 family.

The protein resides in the host nucleus. In terms of biological role, inhibits the host G2/M cell-cycle progression in a p53-independent manner. The protein is G2/M cell-cycle inhibitor DR6 (DR6L) of Homo sapiens (Human).